Consider the following 221-residue polypeptide: Late embryogenesis abundant protein, group 3 (221 aa).

Residues 1–221 (MASHQDKASY…KDSSTITRDH (221 aa)) are disordered. Basic and acidic residues predominate over residues 33 to 42 (TAQHAKDRAA). Positions 43–52 (DAAGHAAGKG) are enriched in low complexity. Basic and acidic residues-rich tracts occupy residues 53–63 (QDAKEATKQKA) and 72–147 (KKTD…KQKA). Residues 212–221 (KDSSTITRDH) show a composition bias toward polar residues.

This sequence belongs to the LEA type 4 family.

This is Late embryogenesis abundant protein, group 3 (MGL3) from Zea mays (Maize).